A 435-amino-acid chain; its full sequence is Zinc metalloproteinase/disintegrin (435 aa).

Residues 1–26 (KMCGVTQNWESYESTKKASQLNLTPE) constitute a propeptide that is removed on maturation. A Pyrrolidone carboxylic acid modification is found at Q27. One can recognise a Peptidase M12B domain in the interval 33–227 (RYIKLGIFVD…HNFQCILNAP (195 aa)). An N-linked (GlcNAc...) asparagine glycan is attached at N115. Disulfide bonds link C144/C222, C184/C206, and C186/C189. A Zn(2+)-binding site is contributed by H169. E170 is a catalytic residue. Zn(2+)-binding residues include H173 and H179. The propeptide occupies 228–243 (LRTDTVSTPVSGNELL). Residues 235–318 (TPVSGNELLE…DCPTDDFHRN (84 aa)) enclose the Disintegrin domain. V237, N240, L242, E244, E247, and D250 together coordinate Ca(2+). Disulfide bonds link C249-C264, C251-C259, C258-C281, C272-C278, C277-C303, and C290-C310. The D/ECD-tripeptide motif lies at 296-298 (ECD).

Belongs to the venom metalloproteinase (M12B) family. P-III subfamily. P-IIIb sub-subfamily. In terms of assembly, monomer. The cofactor is Zn(2+). Post-translationally, the N-terminus of the metalloproteinase is blocked. Expressed by the venom gland.

It is found in the secreted. Inhibited by EDTA. Functionally, cleaves the alpha chain of fibrinogen (FGA) preferentially and cleaves the beta chain (FGB) either on longer incubation or at high concentrations. Induces apoptosis of endothelial cells (prior to cell detachment). Its function is as follows. Disintegrin: inhibits platelet aggregation induced by ADP, thrombin, platelet-activating factor and collagen. Acts by inhibiting fibrinogen interaction with platelet receptors GPIIb/GPIIIa (ITGA2B/ITGB3). In Craspedocephalus gramineus (Bamboo pit viper), this protein is Zinc metalloproteinase/disintegrin.